Consider the following 197-residue polypeptide: 3-isopropylmalate dehydratase small subunit (197 aa).

The protein belongs to the LeuD family. LeuD type 1 subfamily. In terms of assembly, heterodimer of LeuC and LeuD.

The enzyme catalyses (2R,3S)-3-isopropylmalate = (2S)-2-isopropylmalate. The protein operates within amino-acid biosynthesis; L-leucine biosynthesis; L-leucine from 3-methyl-2-oxobutanoate: step 2/4. Its function is as follows. Catalyzes the isomerization between 2-isopropylmalate and 3-isopropylmalate, via the formation of 2-isopropylmaleate. The chain is 3-isopropylmalate dehydratase small subunit from Mycobacterium sp. (strain KMS).